The sequence spans 83 residues: UPF0248 protein PYRAB10580 (83 aa).

Belongs to the UPF0248 family.

The sequence is that of UPF0248 protein PYRAB10580 from Pyrococcus abyssi (strain GE5 / Orsay).